Here is a 211-residue protein sequence, read N- to C-terminus: Thymidylate kinase (211 aa).

7 to 14 is an ATP binding site; the sequence is GIDGCGKT.

It belongs to the thymidylate kinase family.

The enzyme catalyses dTMP + ATP = dTDP + ADP. Its function is as follows. Phosphorylation of dTMP to form dTDP in both de novo and salvage pathways of dTTP synthesis. The sequence is that of Thymidylate kinase from Anaplasma marginale (strain Florida).